We begin with the raw amino-acid sequence, 255 residues long: tRNA (guanine-N(1)-)-methyltransferase (255 aa).

Residues Gly117 and 137-142 contribute to the S-adenosyl-L-methionine site; that span reads LGDFVL.

It belongs to the RNA methyltransferase TrmD family. As to quaternary structure, homodimer.

It is found in the cytoplasm. It carries out the reaction guanosine(37) in tRNA + S-adenosyl-L-methionine = N(1)-methylguanosine(37) in tRNA + S-adenosyl-L-homocysteine + H(+). In terms of biological role, specifically methylates guanosine-37 in various tRNAs. This chain is tRNA (guanine-N(1)-)-methyltransferase, found in Paraburkholderia phytofirmans (strain DSM 17436 / LMG 22146 / PsJN) (Burkholderia phytofirmans).